The sequence spans 1468 residues: Potassium channel K2 (1468 aa).

The next 6 helical transmembrane spans lie at 48–68 (MIYI…YWIY), 146–165 (FNCY…WYIS), 185–209 (IYIY…IISY), 221–240 (LLID…RHFF), 246–264 (IDIY…FLNV), and 285–306 (IILG…IQGI). Residues 326 to 344 (YFYFSIISISTVGYGDIIP) constitute an intramembrane region (pore-forming). The chain crosses the membrane as a helical span at residues 351-368 (VICIFFIFWTFIWVPIQF). The tract at residues 804-823 (TCARTNESHKNNRLRSRRSQ) is disordered. Residues 814-823 (NNRLRSRRSQ) show a composition bias toward basic residues. A coiled-coil region spans residues 1141 to 1185 (KSNKNSNNNNKCEQIKQLNNNLTFKKNEKKTKSNKQNTNDTLERR).

The protein resides in the membrane. Functionally, may be involved in transmembrane potassium transport at the subcellular level not affecting bulk potassium transport across the plasma membrane. The chain is Potassium channel K2 from Plasmodium berghei (strain Anka).